Here is a 122-residue protein sequence, read N- to C-terminus: Large ribosomal subunit protein uL14 (122 aa).

It belongs to the universal ribosomal protein uL14 family. As to quaternary structure, part of the 50S ribosomal subunit. Forms a cluster with proteins L3 and L19. In the 70S ribosome, L14 and L19 interact and together make contacts with the 16S rRNA in bridges B5 and B8.

In terms of biological role, binds to 23S rRNA. Forms part of two intersubunit bridges in the 70S ribosome. In Shewanella amazonensis (strain ATCC BAA-1098 / SB2B), this protein is Large ribosomal subunit protein uL14.